The primary structure comprises 500 residues: Glycerol kinase (500 aa).

Thr-13 is an ADP binding site. Positions 13, 14, and 15 each coordinate ATP. Sn-glycerol 3-phosphate is bound at residue Thr-13. Arg-17 serves as a coordination point for ADP. The sn-glycerol 3-phosphate site is built by Arg-83, Glu-84, Tyr-135, and Asp-244. Residues Arg-83, Glu-84, Tyr-135, Asp-244, and Gln-245 each contribute to the glycerol site. ADP is bound by residues Thr-266 and Gly-309. Residues Thr-266, Gly-309, Gln-313, and Gly-410 each contribute to the ATP site. Residues Gly-410 and Asn-414 each contribute to the ADP site.

Belongs to the FGGY kinase family.

It carries out the reaction glycerol + ATP = sn-glycerol 3-phosphate + ADP + H(+). The protein operates within polyol metabolism; glycerol degradation via glycerol kinase pathway; sn-glycerol 3-phosphate from glycerol: step 1/1. With respect to regulation, inhibited by fructose 1,6-bisphosphate (FBP). Its function is as follows. Key enzyme in the regulation of glycerol uptake and metabolism. Catalyzes the phosphorylation of glycerol to yield sn-glycerol 3-phosphate. This Burkholderia ambifaria (strain MC40-6) protein is Glycerol kinase.